Here is a 491-residue protein sequence, read N- to C-terminus: Glutathione synthetase GSH2 (491 aa).

Arg128 serves as a coordination point for substrate. Glu146 contacts ATP. Mg(2+)-binding residues include Glu146 and Asn148. Residues 150 to 153 (VSVS), 228 to 230 (ERN), Gln234, and 285 to 288 (RTGY) each bind substrate. ATP is bound by residues Lys324, 382 to 391 (KPQREGGGNN), Tyr393, 415 to 418 (MELI), and Glu442. Glu386 contacts Mg(2+). Arg467 is a binding site for substrate. 2 residues coordinate ATP: Lys469 and Glu475. 478–479 (VA) lines the substrate pocket.

Belongs to the eukaryotic GSH synthase family. Homodimer. It depends on Mg(2+) as a cofactor.

It carries out the reaction gamma-L-glutamyl-L-cysteine + glycine + ATP = glutathione + ADP + phosphate + H(+). The protein operates within sulfur metabolism; glutathione biosynthesis; glutathione from L-cysteine and L-glutamate: step 2/2. This chain is Glutathione synthetase GSH2 (GSH2), found in Saccharomyces cerevisiae (strain ATCC 204508 / S288c) (Baker's yeast).